Reading from the N-terminus, the 213-residue chain is MRSKYIVIEGLEGAGKTTARNVVVETLEQLGIRDMVFTREPGGTQLAEKLRSLVLDIKSVGDEIITDKAEVLMFYAARVQLVETVIKPALANGTWVIGDRHDLSTQAYQGGGRGIDQHMLATLRDAVLGDFRPDLTLYLDVTPEVGLKRARARGELDRIEQESFDFFNRTRARYLELAAQDKSIHTIDATQPLEAVMDAIRTTVTRWVKELDA.

Gly10–Thr17 lines the ATP pocket.

The protein belongs to the thymidylate kinase family.

The enzyme catalyses dTMP + ATP = dTDP + ADP. Its function is as follows. Phosphorylation of dTMP to form dTDP in both de novo and salvage pathways of dTTP synthesis. This Escherichia coli O157:H7 (strain EC4115 / EHEC) protein is Thymidylate kinase.